A 348-amino-acid chain; its full sequence is NADH-quinone oxidoreductase subunit H (348 aa).

8 helical membrane-spanning segments follow: residues 7 to 27, 82 to 102, 115 to 135, 161 to 181, 199 to 219, 251 to 271, 287 to 307, and 322 to 342; these read IWLL…VVLL, GVFL…WAVI, VGLL…IMGG, IGFV…TTIV, FLDW…ISAL, LFFL…TILF, VPGI…FAMV, and LGWK…ATFL.

It belongs to the complex I subunit 1 family. As to quaternary structure, NDH-1 is composed of 14 different subunits. Subunits NuoA, H, J, K, L, M, N constitute the membrane sector of the complex.

Its subcellular location is the cell inner membrane. It catalyses the reaction a quinone + NADH + 5 H(+)(in) = a quinol + NAD(+) + 4 H(+)(out). Its function is as follows. NDH-1 shuttles electrons from NADH, via FMN and iron-sulfur (Fe-S) centers, to quinones in the respiratory chain. The immediate electron acceptor for the enzyme in this species is believed to be ubiquinone. Couples the redox reaction to proton translocation (for every two electrons transferred, four hydrogen ions are translocated across the cytoplasmic membrane), and thus conserves the redox energy in a proton gradient. This subunit may bind ubiquinone. In Bartonella quintana (strain Toulouse) (Rochalimaea quintana), this protein is NADH-quinone oxidoreductase subunit H.